Reading from the N-terminus, the 226-residue chain is Lipoprotein signal peptidase (226 aa).

3 helical membrane passes run 12–32, 69–89, and 103–123; these read KVVAALIVLLLVVDQVIKIWV, FLSLFRIVAMGFCIYLLAKLV, and SLIIAGGIGNIIDSIFYGVIF. Catalysis depends on residues Asp-150 and Asp-184. A helical transmembrane segment spans residues 173 to 193; sequence FVFFHPVFNFADSCISIGLIL.

The protein belongs to the peptidase A8 family.

Its subcellular location is the cell inner membrane. It catalyses the reaction Release of signal peptides from bacterial membrane prolipoproteins. Hydrolyzes -Xaa-Yaa-Zaa-|-(S,diacylglyceryl)Cys-, in which Xaa is hydrophobic (preferably Leu), and Yaa (Ala or Ser) and Zaa (Gly or Ala) have small, neutral side chains.. The protein operates within protein modification; lipoprotein biosynthesis (signal peptide cleavage). Its function is as follows. This protein specifically catalyzes the removal of signal peptides from prolipoproteins. This chain is Lipoprotein signal peptidase, found in Porphyromonas gingivalis (strain ATCC 33277 / DSM 20709 / CIP 103683 / JCM 12257 / NCTC 11834 / 2561).